Consider the following 256-residue polypeptide: C-8 sterol isomerase (256 aa).

The interval 1 to 31 (MPPKKQSSSGGNKPSGSGSSSGRSSSGSSCR) is disordered. The segment covering 7–30 (SSSGGNKPSGSGSSSGRSSSGSSC) has biased composition (low complexity). A helical membrane pass occupies residues 40-60 (IGGWLKFFAILFALVAPIAYV).

The protein belongs to the ERG2 family.

It localises to the endoplasmic reticulum membrane. The protein operates within steroid metabolism; ergosterol biosynthesis; ergosterol from zymosterol: step 2/5. Its function is as follows. Catalyzes the reaction which results in unsaturation at C-7 in the B ring of sterols. The sequence is that of C-8 sterol isomerase (erg-1) from Neurospora crassa (strain ATCC 24698 / 74-OR23-1A / CBS 708.71 / DSM 1257 / FGSC 987).